The following is a 275-amino-acid chain: Exosome complex component Rrp42 (275 aa).

This sequence belongs to the RNase PH family. Rrp42 subfamily. In terms of assembly, component of the archaeal exosome complex. Forms a hexameric ring-like arrangement composed of 3 Rrp41-Rrp42 heterodimers. The hexameric ring associates with a trimer of Rrp4 and/or Csl4 subunits.

It localises to the cytoplasm. Non-catalytic component of the exosome, which is a complex involved in RNA degradation. Contributes to the structuring of the Rrp41 active site. In Saccharolobus islandicus (strain L.S.2.15 / Lassen #1) (Sulfolobus islandicus), this protein is Exosome complex component Rrp42.